Here is a 261-residue protein sequence, read N- to C-terminus: Phosphatidylglycerol--prolipoprotein diacylglyceryl transferase (261 aa).

Helical transmembrane passes span 20 to 40 (LAIH…VWLA), 54 to 74 (IIDF…LYYV), and 88 to 108 (IIAI…GAIV). Arg139 lines the a 1,2-diacyl-sn-glycero-3-phospho-(1'-sn-glycerol) pocket. The next 2 helical transmembrane spans lie at 175-195 (MPTF…VMVF) and 235-255 (ARVS…LFVY).

It belongs to the Lgt family.

The protein resides in the cell membrane. The catalysed reaction is L-cysteinyl-[prolipoprotein] + a 1,2-diacyl-sn-glycero-3-phospho-(1'-sn-glycerol) = an S-1,2-diacyl-sn-glyceryl-L-cysteinyl-[prolipoprotein] + sn-glycerol 1-phosphate + H(+). It functions in the pathway protein modification; lipoprotein biosynthesis (diacylglyceryl transfer). Catalyzes the transfer of the diacylglyceryl group from phosphatidylglycerol to the sulfhydryl group of the N-terminal cysteine of a prolipoprotein, the first step in the formation of mature lipoproteins. This chain is Phosphatidylglycerol--prolipoprotein diacylglyceryl transferase, found in Lactococcus lactis subsp. cremoris (strain MG1363).